The sequence spans 168 residues: Photosystem I assembly protein Ycf3 (168 aa).

TPR repeat units lie at residues 35 to 68, 72 to 105, and 120 to 153; these read AFTY…EIDP, SYIL…NPFL, and GEQA…TPGN.

Belongs to the Ycf3 family.

Its subcellular location is the plastid. The protein resides in the chloroplast thylakoid membrane. Essential for the assembly of the photosystem I (PSI) complex. May act as a chaperone-like factor to guide the assembly of the PSI subunits. The sequence is that of Photosystem I assembly protein Ycf3 from Acorus calamus var. americanus (American sweet flag).